An 81-amino-acid polypeptide reads, in one-letter code: Sulfur carrier protein TusA (81 aa).

Cysteine 19 serves as the catalytic Cysteine persulfide intermediate.

It belongs to the sulfur carrier protein TusA family.

It is found in the cytoplasm. Its function is as follows. Sulfur carrier protein which probably makes part of a sulfur-relay system. This is Sulfur carrier protein TusA from Shewanella frigidimarina (strain NCIMB 400).